The sequence spans 116 residues: Large ribosomal subunit protein uL18 (116 aa).

The protein belongs to the universal ribosomal protein uL18 family. In terms of assembly, part of the 50S ribosomal subunit; part of the 5S rRNA/L5/L18/L25 subcomplex. Contacts the 5S and 23S rRNAs.

In terms of biological role, this is one of the proteins that bind and probably mediate the attachment of the 5S RNA into the large ribosomal subunit, where it forms part of the central protuberance. The chain is Large ribosomal subunit protein uL18 from Shewanella putrefaciens (strain CN-32 / ATCC BAA-453).